We begin with the raw amino-acid sequence, 570 residues long: uncharacterized protein (570 aa).

Residues 1-15 (MTESIISSRTASISS) show a composition bias toward low complexity. The tract at residues 1-34 (MTESIISSRTASISSKEGYEIRQGSTDSSSLDLE) is disordered. The residue at position 14 (Ser14) is a Phosphoserine. The next 12 helical transmembrane spans lie at 96–116 (WKLY…LFIG), 141–161 (NLNT…HYIM), 163–183 (TFPL…IVFL), 198–218 (FFLG…MGMF), 229–249 (PVFW…AYGL), 261–281 (LFMI…FFYY), 328–348 (PITW…NLAY), 369–389 (VALA…MYLI), 397–417 (AMFW…LPWS), 423–443 (LATM…LGWT), 457–477 (GLMF…LWQS), and 485–505 (PAWI…YLVA).

The protein belongs to the major facilitator superfamily. Allantoate permease family.

It localises to the endoplasmic reticulum. The protein localises to the membrane. This is an uncharacterized protein from Schizosaccharomyces pombe (strain 972 / ATCC 24843) (Fission yeast).